We begin with the raw amino-acid sequence, 626 residues long: Endoglucanase 19 (626 aa).

An N-terminal signal peptide occupies residues 1-23 (MGSRTTISILVVLLLGLVQLAIS). Asp-79 serves as the catalytic Nucleophile. Catalysis depends on residues His-412, Asp-464, and Glu-473. The segment at 515 to 536 (APVPQRKPTKPPAASSPSPITI) is disordered. Over residues 526–536 (PAASSPSPITI) the composition is skewed to low complexity. 2 N-linked (GlcNAc...) asparagine glycosylation sites follow: Asn-560 and Asn-622.

The protein belongs to the glycosyl hydrolase 9 (cellulase E) family.

Its subcellular location is the secreted. The catalysed reaction is Endohydrolysis of (1-&gt;4)-beta-D-glucosidic linkages in cellulose, lichenin and cereal beta-D-glucans.. This is Endoglucanase 19 from Arabidopsis thaliana (Mouse-ear cress).